Here is a 994-residue protein sequence, read N- to C-terminus: Regulator of telomere elongation helicase 1 homolog (994 aa).

The region spanning 7–316 (AGIPVHFPFE…DDLMLLKEML (310 aa)) is the Helicase ATP-binding domain. 42 to 49 (SPTGTGKT) provides a ligand contact to ATP. [4Fe-4S] cluster is bound by residues Cys146, Cys164, Cys173, and Cys209. The DEAH box signature appears at 252–255 (DEAH). The segment at 861–887 (SSGLVKIHKRERSSPPGSSQSSSQTAK) is disordered. Residues 874-884 (SPPGSSQSSSQ) show a composition bias toward low complexity.

The protein belongs to the helicase family. RAD3/XPD subfamily.

The protein resides in the nucleus. It carries out the reaction ATP + H2O = ADP + phosphate + H(+). Functionally, a probable ATP-dependent DNA helicase implicated in DNA repair and the maintenance of genomic stability. Acts as an anti-recombinase to counteract toxic recombination and limit crossover during meiosis. Regulates meiotic recombination and crossover homeostasis by physically dissociating strand invasion events and thereby promotes noncrossover repair by meiotic synthesis dependent strand annealing (SDSA) as well as disassembly of D loop recombination intermediates. The sequence is that of Regulator of telomere elongation helicase 1 homolog from Drosophila ananassae (Fruit fly).